The chain runs to 166 residues: uncharacterized protein (166 aa).

Gly residues-rich tracts occupy residues 1–10 and 76–86; these read MNYGNNGGGQ and YRGGGGGGGGN. A disordered region spans residues 1 to 117; sequence MNYGNNGGGQ…GGGNKNFGPI (117 aa).

This is an uncharacterized protein from Caenorhabditis elegans.